The primary structure comprises 487 residues: Putative beta-glucosidase 35 (487 aa).

Residues 1–27 form the signal peptide; it reads MGIRMGRRLLLITLLLGALLCNNVAYA. Q48 lines the a beta-D-glucoside pocket. N-linked (GlcNAc...) asparagine glycosylation is found at N76 and N116. Residues H151 and 200-201 each bind a beta-D-glucoside; that span reads NE. Catalysis depends on E201, which acts as the Proton donor. The cysteines at positions 220 and 228 are disulfide-linked. An a beta-D-glucoside-binding site is contributed by Y344. An N-linked (GlcNAc...) asparagine glycan is attached at N369. E414 contacts a beta-D-glucoside. E414 (nucleophile) is an active-site residue. Residues N418 and N419 are each glycosylated (N-linked (GlcNAc...) asparagine). F458 provides a ligand contact to a beta-D-glucoside.

The protein belongs to the glycosyl hydrolase 1 family.

The enzyme catalyses Hydrolysis of terminal, non-reducing beta-D-glucosyl residues with release of beta-D-glucose.. The polypeptide is Putative beta-glucosidase 35 (BGLU35) (Oryza sativa subsp. japonica (Rice)).